Reading from the N-terminus, the 556-residue chain is RING finger protein 207 (556 aa).

An RING-type zinc finger spans residues 25 to 64; that stretch reads CPLCHAQYERPCLLDCFHEFCAGCLRGRAADGRLACPLCQ. The B box-type; atypical zinc-finger motif lies at 93-145; that stretch reads TEVVRCANCDLECGKQDAETTYFCNTCGQPLCARCRDETHRARMFARHDIVAL. Cys98, Cys101, Cys127, and His132 together coordinate Zn(2+). Coiled-coil stretches lie at residues 218–273 and 385–425; these read TREA…NKAE and FTEH…SLIK. A disordered region spans residues 517–556; sequence FQVPVDEPSDHPQNTHDDGVNAEAPARVSTLKPAMEKEVS. Positions 524 to 535 are enriched in basic and acidic residues; it reads PSDHPQNTHDDG.

As to quaternary structure, interacts with the core-glycosylated, but not the fully glycosylated form of KCNH2/HERG. Interacts with DNAJA1 and HSPA8. Interacts (via the C-terminus) with HSPA1A; this interaction additively increases KCNH2 expression.

The protein resides in the cytoplasm. Plays a role in cardiac repolarization possibly by stabilizing membrane expression of the potassium channel KCNH2/HERG, or by assisting its synthesis, folding or export from the endoplasmic reticulum, in a heat shock protein-dependent manner. This is RING finger protein 207 (RNF207) from Bos taurus (Bovine).